The primary structure comprises 88 residues: Large ribosomal subunit protein bL27 (88 aa).

Residues Met1–Lys24 are disordered.

The protein belongs to the bacterial ribosomal protein bL27 family.

This Methylobacterium radiotolerans (strain ATCC 27329 / DSM 1819 / JCM 2831 / NBRC 15690 / NCIMB 10815 / 0-1) protein is Large ribosomal subunit protein bL27.